The chain runs to 640 residues: GATA zinc finger domain-containing protein 12 (640 aa).

Disordered stretches follow at residues 121-209 (SNNI…NIPI) and 355-390 (QQIR…HINN). Composition is skewed to low complexity over residues 122–209 (NNIP…NIPI) and 355–379 (QQIR…QHQQ). Positions 380-390 (PPTNIPQHINN) are enriched in polar residues. Residues 506–531 (CVNCKTSDTPEWRRGPQGAKTLCNAC) form a GATA-type zinc finger.

This is GATA zinc finger domain-containing protein 12 (gtaL) from Dictyostelium discoideum (Social amoeba).